The sequence spans 118 residues: Large ribosomal subunit protein bL20c (118 aa).

It belongs to the bacterial ribosomal protein bL20 family.

It localises to the plastid. Functionally, binds directly to 23S ribosomal RNA and is necessary for the in vitro assembly process of the 50S ribosomal subunit. It is not involved in the protein synthesizing functions of that subunit. This chain is Large ribosomal subunit protein bL20c (rpl20), found in Cuscuta reflexa (Southern Asian dodder).